The primary structure comprises 70 residues: Sec-independent protein translocase protein TatA (70 aa).

A helical transmembrane segment spans residues 1–21 (MGSFSIWHWLIVLVVVALLFG). Positions 45–70 (KGESEQAEDETAKPLPKERDKDSARG) are disordered.

The protein belongs to the TatA/E family. In terms of assembly, the Tat system comprises two distinct complexes: a TatABC complex, containing multiple copies of TatA, TatB and TatC subunits, and a separate TatA complex, containing only TatA subunits. Substrates initially bind to the TatABC complex, which probably triggers association of the separate TatA complex to form the active translocon.

It is found in the cell inner membrane. Functionally, part of the twin-arginine translocation (Tat) system that transports large folded proteins containing a characteristic twin-arginine motif in their signal peptide across membranes. TatA could form the protein-conducting channel of the Tat system. This is Sec-independent protein translocase protein TatA from Phenylobacterium zucineum (strain HLK1).